A 264-amino-acid polypeptide reads, in one-letter code: NAD kinase 1 (264 aa).

The active-site Proton acceptor is the D45. NAD(+) contacts are provided by residues 45–46, 122–123, R148, D150, 161–166, and A185; these read DG, NE, and TAYNKS.

The protein belongs to the NAD kinase family. The cofactor is a divalent metal cation.

The protein resides in the cytoplasm. The catalysed reaction is NAD(+) + ATP = ADP + NADP(+) + H(+). Its function is as follows. Involved in the regulation of the intracellular balance of NAD and NADP, and is a key enzyme in the biosynthesis of NADP. Catalyzes specifically the phosphorylation on 2'-hydroxyl of the adenosine moiety of NAD to yield NADP. The chain is NAD kinase 1 from Listeria monocytogenes serotype 4b (strain F2365).